The following is a 102-amino-acid chain: CRISPR-associated endoribonuclease Cas2 1 (102 aa).

Asp17 is a Mg(2+) binding site.

This sequence belongs to the CRISPR-associated endoribonuclease Cas2 protein family. In terms of assembly, homodimer, forms a heterotetramer with a Cas1 homodimer. Requires Mg(2+) as cofactor.

In terms of biological role, CRISPR (clustered regularly interspaced short palindromic repeat), is an adaptive immune system that provides protection against mobile genetic elements (viruses, transposable elements and conjugative plasmids). CRISPR clusters contain sequences complementary to antecedent mobile elements and target invading nucleic acids. CRISPR clusters are transcribed and processed into CRISPR RNA (crRNA). Functions as a ssRNA-specific endoribonuclease. Involved in the integration of spacer DNA into the CRISPR cassette. The sequence is that of CRISPR-associated endoribonuclease Cas2 1 from Rhodospirillum rubrum (strain ATCC 11170 / ATH 1.1.1 / DSM 467 / LMG 4362 / NCIMB 8255 / S1).